The primary structure comprises 943 residues: Serine/threonine-protein kinase ATG1 (943 aa).

The 306-residue stretch at 22–327 (FVIDKEIGKG…FEDFFHHPVI (306 aa)) folds into the Protein kinase domain. ATP contacts are provided by residues 28 to 36 (IGKGSFAQV) and lysine 51. Aspartate 165 (proton acceptor) is an active-site residue. 5 disordered regions span residues 334–468 (LVED…LTDE), 503–561 (QQGQ…SPGA), 774–800 (LPEE…GGQA), 858–888 (HLPK…SDDK), and 914–943 (AASK…SVPT). Basic and acidic residues predominate over residues 338 to 352 (DIPKPEKPVLAETKS). Polar residues predominate over residues 517–529 (ATQQGHPTSTTGA). Positions 542–554 (RNDHYRKASHDKT) are enriched in basic and acidic residues. Positions 919–928 (QQQQQQQQVV) are enriched in low complexity.

The protein belongs to the protein kinase superfamily. Ser/Thr protein kinase family. APG1/unc-51/ULK1 subfamily. In terms of assembly, homodimer. Forms a ternary complex with ATG13 and ATG17.

The protein localises to the cytoplasm. The protein resides in the preautophagosomal structure membrane. It catalyses the reaction L-seryl-[protein] + ATP = O-phospho-L-seryl-[protein] + ADP + H(+). The enzyme catalyses L-threonyl-[protein] + ATP = O-phospho-L-threonyl-[protein] + ADP + H(+). Functionally, serine/threonine protein kinase involved in the cytoplasm to vacuole transport (Cvt) and found to be essential in autophagy, where it is required for the formation of autophagosomes. Involved in the clearance of protein aggregates which cannot be efficiently cleared by the proteasome. Required for selective autophagic degradation of the nucleus (nucleophagy) as well as for mitophagy which contributes to regulate mitochondrial quantity and quality by eliminating the mitochondria to a basal level to fulfill cellular energy requirements and preventing excess ROS production. Also involved in endoplasmic reticulum-specific autophagic process, in selective removal of ER-associated degradation (ERAD) substrates. Plays a key role in ATG9 and ATG23 cycling through the pre-autophagosomal structure and is necessary to promote ATG18 binding to ATG9 through phosphorylation of ATG9. Catalyzes phosphorylation of ATG4, decreasing the interaction between ATG4 and ATG8 and impairing deconjugation of PE-conjugated forms of ATG8. The sequence is that of Serine/threonine-protein kinase ATG1 from Chaetomium globosum (strain ATCC 6205 / CBS 148.51 / DSM 1962 / NBRC 6347 / NRRL 1970) (Soil fungus).